A 209-amino-acid polypeptide reads, in one-letter code: Uridine kinase (209 aa).

12 to 19 serves as a coordination point for ATP; that stretch reads GGSASGKT.

Belongs to the uridine kinase family.

The protein resides in the cytoplasm. It carries out the reaction uridine + ATP = UMP + ADP + H(+). The enzyme catalyses cytidine + ATP = CMP + ADP + H(+). It participates in pyrimidine metabolism; CTP biosynthesis via salvage pathway; CTP from cytidine: step 1/3. The protein operates within pyrimidine metabolism; UMP biosynthesis via salvage pathway; UMP from uridine: step 1/1. This is Uridine kinase from Chloroflexus aurantiacus (strain ATCC 29366 / DSM 635 / J-10-fl).